A 445-amino-acid chain; its full sequence is Nuclear hormone receptor family member nhr-1 (445 aa).

Residues 19-55 (PMVNSQRNEDPSMYMNGSAASVSHTNGSSSMGNDQKF) form a disordered region. The span at 36–51 (SAASVSHTNGSSSMGN) shows a compositional bias: polar residues. Residues 70 to 145 (GELCAVCSDL…VGMDAKALQI (76 aa)) constitute a DNA-binding region (nuclear receptor). 2 NR C4-type zinc fingers span residues 73-93 (CAVCSDLATGYHYGVASCNGC) and 109-133 (CQYNGNCDVNKNIRCACRHCRFNKC). One can recognise an NR LBD domain in the interval 179–444 (QDQEIIDQLT…PFVKELCMKR (266 aa)).

The protein belongs to the nuclear hormone receptor family.

Its subcellular location is the nucleus. Orphan nuclear receptor which acts in concert with the insulin/IGF-1-like signaling (IIS) pathway during osmotic stress, perhaps in response to a ligand modified by the sulfotransferase ssu-1. The polypeptide is Nuclear hormone receptor family member nhr-1 (nhr-1) (Caenorhabditis elegans).